Here is a 320-residue protein sequence, read N- to C-terminus: ATP synthase gamma chain (320 aa).

It belongs to the ATPase gamma chain family. In terms of assembly, F-type ATPases have 2 components, CF(1) - the catalytic core - and CF(0) - the membrane proton channel. CF(1) has five subunits: alpha(3), beta(3), gamma(1), delta(1), epsilon(1). CF(0) has three main subunits: a, b and c.

The protein resides in the cell membrane. Functionally, produces ATP from ADP in the presence of a proton gradient across the membrane. The gamma chain is believed to be important in regulating ATPase activity and the flow of protons through the CF(0) complex. The protein is ATP synthase gamma chain of Lactobacillus helveticus (strain DPC 4571).